Here is a 639-residue protein sequence, read N- to C-terminus: Poly(A)-specific ribonuclease PARN (639 aa).

A divalent metal cation-binding residues include D28 and E30. Phosphoserine is present on residues S163 and S167. The R3H domain occupies 178–245 (KKFIDQVVEK…ERYIVISKVD (68 aa)). An N6-acetyllysine modification is found at K220. The a divalent metal cation site is built by D292 and D382. Residue K499 is modified to N6-acetyllysine. At S530 the chain carries Phosphoserine. Position 557 is a phosphoserine; by MAPKAPK2 (S557). Residues 563–611 (TVGKRNLSPSQEEAGLEDGVSGEISDTELEQTDSCAEPLSEGRKKAKKL) are disordered. 5 positions are modified to phosphoserine: S583, S587, S619, S623, and S628. Residue T631 is modified to Phosphothreonine.

Belongs to the CAF1 family. As to quaternary structure, homodimer. Found in a mRNA decay complex with RENT1, RENT2 and RENT3B. Interacts with KHSRP. Interacts with CELF1/CUGBP1. Interacts with ZC3HAV1 in an RNA-independent manner. Interacts with DHX36. The cofactor is Mg(2+). Post-translationally, phosphorylation by MAPKAPK2, preventing GADD45A mRNA degradation after genotoxic stress.

The protein localises to the nucleus. It is found in the cytoplasm. The protein resides in the nucleolus. It catalyses the reaction Exonucleolytic cleavage of poly(A) to 5'-AMP.. 3'-exoribonuclease that has a preference for poly(A) tails of mRNAs, thereby efficiently degrading poly(A) tails. Exonucleolytic degradation of the poly(A) tail is often the first step in the decay of eukaryotic mRNAs and is also used to silence certain maternal mRNAs translationally during oocyte maturation and early embryonic development. Interacts with both the 3'-end poly(A) tail and the 5'-end cap structure during degradation, the interaction with the cap structure being required for an efficient degradation of poly(A) tails. Involved in nonsense-mediated mRNA decay, a critical process of selective degradation of mRNAs that contain premature stop codons. Also involved in degradation of inherently unstable mRNAs that contain AU-rich elements (AREs) in their 3'-UTR, possibly via its interaction with KHSRP. Probably mediates the removal of poly(A) tails of AREs mRNAs, which constitutes the first step of destabilization. Also able to recognize poly(A) tails of microRNAs such as MIR21 and H/ACA box snoRNAs (small nucleolar RNAs) leading to microRNAs degradation or snoRNA increased stability. This Pongo abelii (Sumatran orangutan) protein is Poly(A)-specific ribonuclease PARN (PARN).